We begin with the raw amino-acid sequence, 584 residues long: Aspartate--tRNA(Asp/Asn) ligase (584 aa).

Glu-177 lines the L-aspartate pocket. The segment at Gln-201–Lys-204 is aspartate. Residue Arg-223 participates in L-aspartate binding. Residues Arg-223–Glu-225 and Gln-232 each bind ATP. His-447 serves as a coordination point for L-aspartate. Glu-481 contributes to the ATP binding site. Residue Arg-488 coordinates L-aspartate. Gly-533–Arg-536 contacts ATP.

This sequence belongs to the class-II aminoacyl-tRNA synthetase family. Type 1 subfamily. As to quaternary structure, homodimer.

It localises to the cytoplasm. The catalysed reaction is tRNA(Asx) + L-aspartate + ATP = L-aspartyl-tRNA(Asx) + AMP + diphosphate. Its function is as follows. Aspartyl-tRNA synthetase with relaxed tRNA specificity since it is able to aspartylate not only its cognate tRNA(Asp) but also tRNA(Asn). Reaction proceeds in two steps: L-aspartate is first activated by ATP to form Asp-AMP and then transferred to the acceptor end of tRNA(Asp/Asn). In Chlamydia abortus (strain DSM 27085 / S26/3) (Chlamydophila abortus), this protein is Aspartate--tRNA(Asp/Asn) ligase.